We begin with the raw amino-acid sequence, 207 residues long: Outer-membrane lipoprotein carrier protein (207 aa).

The N-terminal stretch at 1–23 is a signal peptide; the sequence is MMKPHNLFQFLAVCSLTVAVASA.

Belongs to the LolA family. Monomer.

Its subcellular location is the periplasm. Its function is as follows. Participates in the translocation of lipoproteins from the inner membrane to the outer membrane. Only forms a complex with a lipoprotein if the residue after the N-terminal Cys is not an aspartate (The Asp acts as a targeting signal to indicate that the lipoprotein should stay in the inner membrane). The sequence is that of Outer-membrane lipoprotein carrier protein from Neisseria gonorrhoeae (strain ATCC 700825 / FA 1090).